The chain runs to 127 residues: Large ribosomal subunit protein bL12 (127 aa).

The protein belongs to the bacterial ribosomal protein bL12 family. Homodimer. Part of the ribosomal stalk of the 50S ribosomal subunit. Forms a multimeric L10(L12)X complex, where L10 forms an elongated spine to which 2 to 4 L12 dimers bind in a sequential fashion. Binds GTP-bound translation factors.

Forms part of the ribosomal stalk which helps the ribosome interact with GTP-bound translation factors. Is thus essential for accurate translation. The chain is Large ribosomal subunit protein bL12 from Desulforapulum autotrophicum (strain ATCC 43914 / DSM 3382 / VKM B-1955 / HRM2) (Desulfobacterium autotrophicum).